A 36-amino-acid chain; its full sequence is Probable non-specific lipid-transfer protein (36 aa).

This sequence belongs to the plant LTP family. Phosphorylated by Ca(2+)-dependent protein kinase.

Plant non-specific lipid-transfer proteins transfer phospholipids as well as galactolipids across membranes. May play a role in wax or cutin deposition in the cell walls of expanding epidermal cells and certain secretory tissues. This is Probable non-specific lipid-transfer protein from Pinus pinea (Italian stone pine).